We begin with the raw amino-acid sequence, 456 residues long: uncharacterized protein (456 aa).

Residues 2 to 60 (AMRKGKEYELNIEEIEFPSMGIAYHEGLKVYVKHGIPGQKVLARITTKKKDHAKGKIIE) form the TRAM domain. Residues C73, C79, C82, and C162 each contribute to the [4Fe-4S] cluster site. Residues Q288, Y317, E338, and D383 each coordinate S-adenosyl-L-methionine. C410 serves as the catalytic Nucleophile.

The protein belongs to the class I-like SAM-binding methyltransferase superfamily. RNA M5U methyltransferase family.

This is an uncharacterized protein from Clostridium tetani (strain Massachusetts / E88).